The sequence spans 894 residues: MLPRPSSRFLSTQRGPGRAVKKLIAIGEKWKQKTTRGPPKQGTLNNRSKYILCQFPYPSGVLHIGHLRVYVISDSLNRFYKQRGYNVIHPMGWDAFGLPAENAAIERGINPAIWTRDNIAKMKQQMESMLANFDWDREVTTCDPEYYKFTQWIFLKLFENGLAYRKEAEINWDPVDKTVLANEQVDAQGRSWRSGAIVEKKQLKQWFLGITKFAPKLRKHLNQLKDWPSNVKQMQKNWIGESIGAELVFKVADSKFENLIVFTTRPETLFAVQYVALALDHPIVQKYSEVIPDLKEFLQKSDQLPSDTKEGFRLPDIKAVNPLTKEELPIFAAPYVISSYGTAPSAVMGCPGHDSRDFEFWQQNCPGEHIKTCIAPFFDDASKTSEKERQKIIDTVPFTSADGILTKESGEYSGVFTAVARKSIMGKLHSKGLSKNIIRYRIRDWLISRQRYWGTPIPIIHCDNCGPVPVPESDLPVKLPELKGLDTKGNPLSTIDEFVNVACPSCGSPAKRETDTMDTFIDSSWYYFRFLDPKNTSKPFDREIASEHMPVDIYIGGVEHAILHLLYSRFIAKFLGSINAWDDPTGIFEPFRKLVTQGMVQGKTYVDPDSGKFLTPDELTFVKDPSDGNTTIIKSNGKIPMVSYEKMSKSKHNGADPNECILRHGADATRAHILFQSPIADALNWDESKIVGIERWLQKVLCLTKNILGLEKNLAISKDYKTPTDLNDAEVKFHNDFQRFLKSITESFEVHLSLNTVISDYMKLTNLLESALKKSEVRKEMMVQNLQKLVTIIYPAVPSISEEAAELISSQMEWNQYRWPEVERTTESKFKKFQIVVNGRVKFMYTADKDFLKSGRDAVIETLLKLPEGRMYLMNKKIKKFVMKYNVISFLFHK.

Residues 1–9 constitute a mitochondrion transit peptide; it reads MLPRPSSRF. Positions 56 to 66 match the 'HIGH' region motif; it reads PYPSGVLHIGH. The short motif at 646 to 650 is the 'KMSKS' region element; that stretch reads KMSKS. Lysine 649 provides a ligand contact to ATP.

This sequence belongs to the class-I aminoacyl-tRNA synthetase family.

The protein localises to the mitochondrion matrix. It carries out the reaction tRNA(Leu) + L-leucine + ATP = L-leucyl-tRNA(Leu) + AMP + diphosphate. This Saccharomyces paradoxus (Yeast) protein is Leucine--tRNA ligase, mitochondrial (NAM2).